Reading from the N-terminus, the 178-residue chain is Large ribosomal subunit protein uL6 (178 aa).

This sequence belongs to the universal ribosomal protein uL6 family. Part of the 50S ribosomal subunit.

This protein binds to the 23S rRNA, and is important in its secondary structure. It is located near the subunit interface in the base of the L7/L12 stalk, and near the tRNA binding site of the peptidyltransferase center. This Shouchella clausii (strain KSM-K16) (Alkalihalobacillus clausii) protein is Large ribosomal subunit protein uL6.